Here is a 227-residue protein sequence, read N- to C-terminus: Cytochrome c oxidase subunit 2 (227 aa).

Topologically, residues 1–14 (MAYPFQLGLQDATS) are mitochondrial intermembrane. A helical transmembrane segment spans residues 15–45 (PIMEELTNFHDHTLMIVFLISSLVLYIISLM). Residues 46 to 59 (LTTKLTHTSTMDAQ) are Mitochondrial matrix-facing. The helical transmembrane segment at 60 to 87 (EVETIWTILPAAILVLIALPSLRILYMM) threads the bilayer. Residues 88–227 (DEINNPVLTV…YFESWSASMI (140 aa)) are Mitochondrial intermembrane-facing. The Cu cation site is built by H161, C196, E198, C200, H204, and M207. Residue E198 coordinates Mg(2+). Phosphotyrosine is present on Y218.

Belongs to the cytochrome c oxidase subunit 2 family. In terms of assembly, component of the cytochrome c oxidase (complex IV, CIV), a multisubunit enzyme composed of 14 subunits. The complex is composed of a catalytic core of 3 subunits MT-CO1, MT-CO2 and MT-CO3, encoded in the mitochondrial DNA, and 11 supernumerary subunits COX4I, COX5A, COX5B, COX6A, COX6B, COX6C, COX7A, COX7B, COX7C, COX8 and NDUFA4, which are encoded in the nuclear genome. The complex exists as a monomer or a dimer and forms supercomplexes (SCs) in the inner mitochondrial membrane with NADH-ubiquinone oxidoreductase (complex I, CI) and ubiquinol-cytochrome c oxidoreductase (cytochrome b-c1 complex, complex III, CIII), resulting in different assemblies (supercomplex SCI(1)III(2)IV(1) and megacomplex MCI(2)III(2)IV(2)). Found in a complex with TMEM177, COA6, COX18, COX20, SCO1 and SCO2. Interacts with TMEM177 in a COX20-dependent manner. Interacts with COX20. Interacts with COX16. Cu cation is required as a cofactor.

It localises to the mitochondrion inner membrane. It catalyses the reaction 4 Fe(II)-[cytochrome c] + O2 + 8 H(+)(in) = 4 Fe(III)-[cytochrome c] + 2 H2O + 4 H(+)(out). Functionally, component of the cytochrome c oxidase, the last enzyme in the mitochondrial electron transport chain which drives oxidative phosphorylation. The respiratory chain contains 3 multisubunit complexes succinate dehydrogenase (complex II, CII), ubiquinol-cytochrome c oxidoreductase (cytochrome b-c1 complex, complex III, CIII) and cytochrome c oxidase (complex IV, CIV), that cooperate to transfer electrons derived from NADH and succinate to molecular oxygen, creating an electrochemical gradient over the inner membrane that drives transmembrane transport and the ATP synthase. Cytochrome c oxidase is the component of the respiratory chain that catalyzes the reduction of oxygen to water. Electrons originating from reduced cytochrome c in the intermembrane space (IMS) are transferred via the dinuclear copper A center (CU(A)) of subunit 2 and heme A of subunit 1 to the active site in subunit 1, a binuclear center (BNC) formed by heme A3 and copper B (CU(B)). The BNC reduces molecular oxygen to 2 water molecules using 4 electrons from cytochrome c in the IMS and 4 protons from the mitochondrial matrix. This is Cytochrome c oxidase subunit 2 (MT-CO2) from Conilurus penicillatus (Brush-tailed rabbit-rat).